Reading from the N-terminus, the 93-residue chain is Small ribosomal subunit protein uS19 (93 aa).

It belongs to the universal ribosomal protein uS19 family.

Functionally, protein S19 forms a complex with S13 that binds strongly to the 16S ribosomal RNA. This chain is Small ribosomal subunit protein uS19, found in Lawsonia intracellularis (strain PHE/MN1-00).